Reading from the N-terminus, the 384-residue chain is WD repeat-containing protein 55 (384 aa).

Residues 1 to 33 (MDPTCQESPAEDSNNEEDLDSTKAAPRIRDTPE) are disordered. Over residues 9 to 19 (PAEDSNNEEDL) the composition is skewed to acidic residues. WD repeat units lie at residues 36-75 (VLEA…GETK), 82-121 (HHLK…LERR), 125-163 (AHSA…PLMD), 166-205 (QHEE…FELL), 208-247 (PQSG…ATSD), 250-289 (ALRA…VVGT), and 293-332 (HAGE…TVVV). Ser-354 and Ser-383 each carry phosphoserine. The disordered stretch occupies residues 362–384 (LREDEEEAKAPEEVSGESDDDSD). A compositionally biased stretch (acidic residues) spans 375–384 (VSGESDDDSD).

The protein belongs to the WD repeat WDR55 family.

It is found in the nucleus. The protein resides in the nucleolus. The protein localises to the cytoplasm. Its function is as follows. Nucleolar protein that acts as a modulator of rRNA synthesis. Plays a central role during organogenesis. The polypeptide is WD repeat-containing protein 55 (Wdr55) (Rattus norvegicus (Rat)).